Consider the following 548-residue polypeptide: CTP synthase (548 aa).

Residues 1-265 form an amidoligase domain region; the sequence is MTRYIFVTGG…DDIICDKLRI (265 aa). Serine 13 contributes to the CTP binding site. Serine 13 provides a ligand contact to UTP. Residues 14–19 and aspartate 71 each bind ATP; that span reads SLGKGI. Mg(2+) contacts are provided by aspartate 71 and glutamate 139. Residues 146–148, 186–191, and lysine 222 each bind CTP; these read DIE and KTKPTQ. Residues 186–191 and lysine 222 contribute to the UTP site; that span reads KTKPTQ. Positions 290–541 constitute a Glutamine amidotransferase type-1 domain; it reads NIAMVGKYME…VNAALAYKAA (252 aa). An L-glutamine-binding site is contributed by glycine 351. Cysteine 378 acts as the Nucleophile; for glutamine hydrolysis in catalysis. Residues 379 to 382, glutamate 402, and arginine 469 each bind L-glutamine; that span reads LGMQ. Catalysis depends on residues histidine 514 and glutamate 516.

It belongs to the CTP synthase family. As to quaternary structure, homotetramer.

The catalysed reaction is UTP + L-glutamine + ATP + H2O = CTP + L-glutamate + ADP + phosphate + 2 H(+). The enzyme catalyses L-glutamine + H2O = L-glutamate + NH4(+). It catalyses the reaction UTP + NH4(+) + ATP = CTP + ADP + phosphate + 2 H(+). It participates in pyrimidine metabolism; CTP biosynthesis via de novo pathway; CTP from UDP: step 2/2. With respect to regulation, allosterically activated by GTP, when glutamine is the substrate; GTP has no effect on the reaction when ammonia is the substrate. The allosteric effector GTP functions by stabilizing the protein conformation that binds the tetrahedral intermediate(s) formed during glutamine hydrolysis. Inhibited by the product CTP, via allosteric rather than competitive inhibition. Its function is as follows. Catalyzes the ATP-dependent amination of UTP to CTP with either L-glutamine or ammonia as the source of nitrogen. Regulates intracellular CTP levels through interactions with the four ribonucleotide triphosphates. In Chromohalobacter salexigens (strain ATCC BAA-138 / DSM 3043 / CIP 106854 / NCIMB 13768 / 1H11), this protein is CTP synthase.